Reading from the N-terminus, the 333-residue chain is NADH-ubiquinone oxidoreductase chain 2 (333 aa).

Helical transmembrane passes span 10-30, 57-77, 91-111, 121-141, 143-163, 170-190, 192-212, 242-262, 267-287, and 313-333; these read WFIY…NIFI, LIYY…IIVY, FMVQ…FWMI, QIFL…VSMT, INSW…FYAN, KLLA…LELN, NMFI…ISFL, MYPI…MVSV, WILF…IIIL, and SYFA…LNFL.

This sequence belongs to the complex I subunit 2 family.

Its subcellular location is the mitochondrion inner membrane. The enzyme catalyses a ubiquinone + NADH + 5 H(+)(in) = a ubiquinol + NAD(+) + 4 H(+)(out). Core subunit of the mitochondrial membrane respiratory chain NADH dehydrogenase (Complex I) that is believed to belong to the minimal assembly required for catalysis. Complex I functions in the transfer of electrons from NADH to the respiratory chain. The immediate electron acceptor for the enzyme is believed to be ubiquinone. The polypeptide is NADH-ubiquinone oxidoreductase chain 2 (ND2) (Apis mellifera ligustica (Common honeybee)).